The following is a 454-amino-acid chain: Adenylosuccinate synthetase isozyme 1 B (454 aa).

Residues 1 to 24 (MSGTRASNDRSSHPGAGGHKRPRY) form a disordered region. GTP contacts are provided by residues 39–45 (GDEGKGK) and 67–69 (GHT). Catalysis depends on Asp40, which acts as the Proton acceptor. Residues Asp40 and Gly67 each contribute to the Mg(2+) site. Asp40 contacts substrate. IMP contacts are provided by residues 40–43 (DEGK), 65–68 (NAGH), Thr160, Arg174, Asn253, Thr268, and Arg332. His68 serves as the catalytic Proton donor. 328–334 (VTTGRKR) contributes to the substrate binding site. GTP contacts are provided by residues Arg334, 360–362 (KLD), and 442–445 (GVGK).

This sequence belongs to the adenylosuccinate synthetase family. As to quaternary structure, homodimer. The cofactor is Mg(2+).

The protein localises to the cytoplasm. It catalyses the reaction IMP + L-aspartate + GTP = N(6)-(1,2-dicarboxyethyl)-AMP + GDP + phosphate + 2 H(+). Its pathway is purine metabolism; AMP biosynthesis via de novo pathway; AMP from IMP: step 1/2. Functionally, component of the purine nucleotide cycle (PNC), which interconverts IMP and AMP to regulate the nucleotide levels in various tissues, and which contributes to glycolysis and ammoniagenesis. Catalyzes the first committed step in the biosynthesis of AMP from IMP. This chain is Adenylosuccinate synthetase isozyme 1 B (adss1-b), found in Xenopus laevis (African clawed frog).